We begin with the raw amino-acid sequence, 307 residues long: MANLQKYIEYSREVQQALENNQPIVALESTIISHGMPYPQNVEMATTVEQIIRNNGAIPATIAIIDGKIKIGLESEDLEILATSKDVAKVSRRDLAEVVAMKCVGATTVATTMICAAMAGIQFFVTGGIGGVHKGAEHTMDISADLEELSKTNVTVICAGAKSILDLPKTMEYLETKGVPVIGYQTNELPAFFTRESGVKLTSSVETPERLADIHLTKQQLNLEGGIVVANPIPYEHALSKAYIEAIINEAVVEAENQGIKGKDATPFLLGKIVEKTNGKSLAANIKLVENNAALGAKIAVAVNKLL.

Residue E28 is the Proton donor of the active site. Positions 89 and 109 each coordinate substrate. D141 contributes to the Mn(2+) binding site. 143–145 (SAD) contacts substrate. K162 acts as the Nucleophile in catalysis.

This sequence belongs to the pseudouridine-5'-phosphate glycosidase family. In terms of assembly, homotrimer. Requires Mn(2+) as cofactor.

It catalyses the reaction D-ribose 5-phosphate + uracil = psi-UMP + H2O. Its function is as follows. Catalyzes the reversible cleavage of pseudouridine 5'-phosphate (PsiMP) to ribose 5-phosphate and uracil. Functions biologically in the cleavage direction, as part of a pseudouridine degradation pathway. This is Pseudouridine-5'-phosphate glycosidase from Staphylococcus aureus (strain MW2).